Consider the following 147-residue polypeptide: Hemoglobin subunit gamma (147 aa).

Residues 3 to 147 (NFTAEDKAAI…VASALASRYH (145 aa)) enclose the Globin domain. 2 residues coordinate heme b: His-64 and His-93.

This sequence belongs to the globin family. As to quaternary structure, heterotetramer of two alpha chains and two gamma chains in fetal hemoglobin (Hb F). In terms of tissue distribution, red blood cells.

Gamma chains make up the fetal hemoglobin F, in combination with alpha chains. This chain is Hemoglobin subunit gamma (HBG1), found in Callithrix jacchus (White-tufted-ear marmoset).